Consider the following 115-residue polypeptide: Dolichyl-diphosphooligosaccharide--protein glycosyltransferase subunit DAD1 (115 aa).

Topologically, residues 1–31 are cytoplasmic; it reads MVKSTSKDAQDLFRSLRSAYSATPTNLKIID. A helical membrane pass occupies residues 32–52; that stretch reads LYVVFAVFTALIQVVYMALVG. Residues 53 to 55 lie on the Lumenal side of the membrane; sequence SFP. A helical transmembrane segment spans residues 56–76; that stretch reads FNSFLSGVLSCIGTAVLAVCL. Residues 77-94 lie on the Cytoplasmic side of the membrane; the sequence is RIQVNKENKEFKDLAPER. Residues 95-115 traverse the membrane as a helical segment; sequence AFADFVLCNLVLHLVIINFLG.

Belongs to the DAD/OST2 family. In terms of assembly, component of the oligosaccharyltransferase (OST) complex. Ubiquitous.

The protein localises to the endoplasmic reticulum membrane. It participates in protein modification; protein glycosylation. Functionally, subunit of the oligosaccharyl transferase (OST) complex that catalyzes the initial transfer of a defined glycan (Glc(3)Man(9)GlcNAc(2) in eukaryotes) from the lipid carrier dolichol-pyrophosphate to an asparagine residue within an Asn-X-Ser/Thr consensus motif in nascent polypeptide chains, the first step in protein N-glycosylation. N-glycosylation occurs cotranslationally and the complex associates with the Sec61 complex at the channel-forming translocon complex that mediates protein translocation across the endoplasmic reticulum (ER). All subunits are required for a maximal enzyme activity. In Arabidopsis thaliana (Mouse-ear cress), this protein is Dolichyl-diphosphooligosaccharide--protein glycosyltransferase subunit DAD1 (DAD1).